Here is a 171-residue protein sequence, read N- to C-terminus: Co-chaperone protein HscB (171 aa).

A J domain is found at 2 to 74 (DYFTLFGLPA…LTRAEYLLSL (73 aa)).

The protein belongs to the HscB family. In terms of assembly, interacts with HscA and stimulates its ATPase activity. Interacts with IscU.

Functionally, co-chaperone involved in the maturation of iron-sulfur cluster-containing proteins. Seems to help targeting proteins to be folded toward HscA. This is Co-chaperone protein HscB from Salmonella agona (strain SL483).